A 333-amino-acid chain; its full sequence is Adenosine deaminase (333 aa).

H12 and H14 together coordinate Zn(2+). Substrate contacts are provided by H14, D16, and G170. A Zn(2+)-binding site is contributed by H197. E200 (proton donor) is an active-site residue. Residue D278 participates in Zn(2+) binding. Substrate is bound at residue D279.

The protein belongs to the metallo-dependent hydrolases superfamily. Adenosine and AMP deaminases family. Adenosine deaminase subfamily. The cofactor is Zn(2+).

It catalyses the reaction adenosine + H2O + H(+) = inosine + NH4(+). The enzyme catalyses 2'-deoxyadenosine + H2O + H(+) = 2'-deoxyinosine + NH4(+). Its function is as follows. Catalyzes the hydrolytic deamination of adenosine and 2-deoxyadenosine. The chain is Adenosine deaminase from Salmonella typhi.